The primary structure comprises 80 residues: Small ribosomal subunit protein uS17 (80 aa).

This sequence belongs to the universal ribosomal protein uS17 family. In terms of assembly, part of the 30S ribosomal subunit.

Its function is as follows. One of the primary rRNA binding proteins, it binds specifically to the 5'-end of 16S ribosomal RNA. This is Small ribosomal subunit protein uS17 from Chelativorans sp. (strain BNC1).